The following is a 1042-amino-acid chain: SWI/SNF-related matrix-associated actin-dependent regulator of chromatin subfamily A member 1 (1042 aa).

A disordered region spans residues 25–82 (EDEQPGPSTSQEEGAAAAATEATAATEKGEKKKEKNVSSFQLKLAAKAPKSEKEMDPE). The span at 36–50 (EEGAAAAATEATAAT) shows a compositional bias: low complexity. Basic and acidic residues-rich tracts occupy residues 51 to 60 (EKGEKKKEKN) and 73 to 82 (PKSEKEMDPE). A phosphoserine mark is found at Ser-116 and Ser-119. One can recognise a Helicase ATP-binding domain in the interval 195–360 (ISLYENGVNG…WALLNFLLPD (166 aa)). 208 to 215 (DEMGLGKT) lines the ATP pocket. A DEAH box motif is present at residues 311-314 (DEAH). Residues 490–641 (VLDKLLAKLK…SIVIQQGRLI (152 aa)) enclose the Helicase C-terminal domain. Residues Lys-650, Lys-716, and Lys-738 each participate in a glycyl lysine isopeptide (Lys-Gly) (interchain with G-Cter in SUMO2) cross-link. Residues 819 to 849 (EQKKIDGAEPLTPEETEEKEKLLTQGFTNWT) form a disordered region. Over residues 828 to 837 (PLTPEETEEK) the composition is skewed to basic and acidic residues. The SANT 1 domain maps to 843 to 895 (QGFTNWTKRDFNQFIKANEKYGRDDIDNIAREVEGKSPEEVMEYSAVFWERCN). At Tyr-942 the chain carries Phosphotyrosine. Residues 946–1010 (KGKNYTEEED…QRRCNTLISL (65 aa)) form the SANT 2 domain.

Belongs to the SNF2/RAD54 helicase family. ISWI subfamily. In terms of assembly, may form homodimers. Component of the ACF-1 ISWI chromatin remodeling complex at least composed of SMARCA1 and BAZ1A, which regulates the spacing of histone octamers on the DNA template to facilitate access to DNA. Within the complex interacts with BAZ1A; the interaction is direct. Component of the WICH-1 ISWI chromatin remodeling complex at least composed of SMARCA1 and BAZ1B/WSTF. Within the complex interacts with BAZ1B/WSTF. Component of the NoRC-1 ISWI chromatin remodeling complex at least composed of SMARCA1 and BAZ2A/TIP5. Within the complex interacts with BAZ2A/TIP5. Component of the BRF-1 ISWI chromatin remodeling complex at least composed of SMARCA1 and BAZ2B. Within the complex interacts with BAZ2B. Component of the NURF-1 ISWI chromatin remodeling complex (also called the nucleosome-remodeling factor (NURF) complex) at least composed of SMARCA1, BPTF, RBBP4 and RBBP7. Within the complex interacts with BPTF. Within the complex interacts with RBBP4 and RBBP7. Component of the CERF-1 ISWI chromatin remodeling complex (also called the CECR2-containing-remodeling factor (CERF) complex) at least composed of CECR2 and SMARCA1. LUZP1 is detected as part of the CERF-1 complex in embryonic stem cells where it is involved in complex stabilization but is not detected in the complex in the testis. Component of the RSF-1 ISWI chromatin remodeling complex at least composed of SMARCA1 and RSF1. Within the complex interacts with RSF1. Interacts with PRLR. Interacts with ERCC6. As to quaternary structure, may form homodimers. Component of the BPFT-SMARCA1 complex at least composed of SMARCA1, BPFT, RBBP4 and RBBP7; the complex is catalytically inactive and does not remodel chromatin. Within the complex interacts with BPTF, RBBP4 and RBBP7. Component of the BAZ1A-1-SMARCA1 complex at least composed of SMARCA1 and BAZ1A; the complex is catalytically inactive and does not remodel chromatin. Component of the BAZ1B-1-SMARCA1 complex at least composed of SMARCA1 and BAZ1B; the complex is catalytically inactive and does not remodel chromatin. Expressed in lung, breast, kidney, ovary, skeletal muscle and brain. As to expression, mainly expressed in non-neuronal tissues such as lung, breast, kidney, and ovary.

Its subcellular location is the nucleus. The protein resides in the chromosome. It carries out the reaction ATP + H2O = ADP + phosphate + H(+). Functionally, ATPase that possesses intrinsic ATP-dependent chromatin-remodeling activity. ATPase activity is substrate-dependent, and is increased when nucleosomes are the substrate, but is also catalytically active when DNA alone is the substrate. Catalytic subunit of ISWI chromatin-remodeling complexes, which form ordered nucleosome arrays on chromatin and facilitate access to DNA during DNA-templated processes such as DNA replication, transcription, and repair. Within the ISWI chromatin-remodeling complexes, slides edge- and center-positioned histone octamers away from their original location on the DNA template. Catalytic activity and histone octamer sliding propensity is regulated and determined by components of the ISWI chromatin-remodeling complexes. The BAZ1A-, BAZ1B-, BAZ2A- and BAZ2B-containing ISWI chromatin-remodeling complexes regulate the spacing of nucleosomes along the chromatin and have the ability to slide mononucleosomes to the center of a DNA template. The CECR2- and RSF1-containing ISWI chromatin-remodeling complexes do not have the ability to slide mononucleosomes to the center of a DNA template. Within the NURF-1 and CERF-1 ISWI chromatin remodeling complexes, nucleosomes are the preferred substrate for its ATPase activity. Within the NURF-1 ISWI chromatin-remodeling complex, binds to the promoters of En1 and En2 to positively regulate their expression and promote brain development. May promote neurite outgrowth. May be involved in the development of luteal cells. Facilitates nucleosome assembly during DNA replication, ensuring replication fork progression and genomic stability by preventing replication stress and nascent DNA gaps. Its function is as follows. Catalytically inactive when either DNA or nucleosomes are the substrate and does not possess chromatin-remodeling activity. Acts as a negative regulator of chromatin remodelers by generating inactive complexes. The sequence is that of SWI/SNF-related matrix-associated actin-dependent regulator of chromatin subfamily A member 1 from Homo sapiens (Human).